The primary structure comprises 127 residues: Small ribosomal subunit protein eS6 (127 aa).

It belongs to the eukaryotic ribosomal protein eS6 family.

This chain is Small ribosomal subunit protein eS6, found in Picrophilus torridus (strain ATCC 700027 / DSM 9790 / JCM 10055 / NBRC 100828 / KAW 2/3).